The following is a 201-amino-acid chain: Small ribosomal subunit protein uS4c (201 aa).

Residues 20–44 (GLTSKRPTVGSELRNQSRSTKKSQY) are disordered. The region spanning 89 to 150 (MRLDNILFRL…NKKSKTLIQN (62 aa)) is the S4 RNA-binding domain.

Belongs to the universal ribosomal protein uS4 family. In terms of assembly, part of the 30S ribosomal subunit. Contacts protein S5. The interaction surface between S4 and S5 is involved in control of translational fidelity.

It localises to the plastid. The protein localises to the chloroplast. Its function is as follows. One of the primary rRNA binding proteins, it binds directly to 16S rRNA where it nucleates assembly of the body of the 30S subunit. In terms of biological role, with S5 and S12 plays an important role in translational accuracy. This is Small ribosomal subunit protein uS4c (rps4) from Lotus japonicus (Lotus corniculatus var. japonicus).